Consider the following 259-residue polypeptide: Glucosamine-6-phosphate deaminase (259 aa).

The active-site Proton acceptor; for enolization step is the Asp-66. Asp-135 serves as the catalytic For ring-opening step. The Proton acceptor; for ring-opening step role is filled by His-137. Glu-142 serves as the catalytic For ring-opening step.

Belongs to the glucosamine/galactosamine-6-phosphate isomerase family. NagB subfamily.

It catalyses the reaction alpha-D-glucosamine 6-phosphate + H2O = beta-D-fructose 6-phosphate + NH4(+). Its pathway is amino-sugar metabolism; N-acetylneuraminate degradation; D-fructose 6-phosphate from N-acetylneuraminate: step 5/5. Functionally, catalyzes the reversible isomerization-deamination of glucosamine 6-phosphate (GlcN6P) to form fructose 6-phosphate (Fru6P) and ammonium ion. This Rhodococcus opacus (strain B4) protein is Glucosamine-6-phosphate deaminase.